A 293-amino-acid chain; its full sequence is ATP synthase subunit gamma, mitochondrial (293 aa).

Residues 1-21 (MFALRTAARPAARSVGATRNY) constitute a mitochondrion transit peptide.

F-type ATP synthases have 2 components, the catalytic core F(1) and the membrane-embedded component F(0), linked together by a central stalk and a peripheral stalk. The central stalk, also called rotor shaft, is often seen as part of F(1). The peripheral stalk is seen as part of F(0). F(0) contains the membrane channel next to the rotor. F-type ATP synthases form dimers but each monomer functions independently in ATP generation. The dimer consists of 17 different polypeptides: ATP1 (subunit alpha, 3 molecules per monomer, part of F(1)), ATP2 (subunit beta, 3 copies per monomer, part of F(1)), ATP3 (subunit gamma, part of the central stalk), ATP4 (subunit b, part of the peripheral stalk), ATP5/OSCP (subunit 5/OSCP, part of the peripheral stalk), ATP6 (subunit a, part of the peripheral stalk), ATP7 (subunit d, part of the peripheral stalk), ATP8 (subunit 8, part of the peripheral stalk), OLI1 (subunit c, part of the rotor, 10 molecules per monomer), ATP14 (subunit h, part of the peripheral stalk), ATP15 (subunit epsilon, part of the central stalk), ATP16 (subunit delta, part of the central stalk), ATP17 (subunit f, part of the peripheral stalk), ATP18 (subunit i/j, part of the peripheral stalk), ATP19 (subunit k, dimer-specific, at interface between monomers), ATP20 (subunit g, at interface between monomers), TIM11 (subunit e, at interface between monomers).

The protein localises to the mitochondrion inner membrane. Functionally, mitochondrial membrane ATP synthase (F(1)F(0) ATP synthase or Complex V) produces ATP from ADP in the presence of a proton gradient across the membrane which is generated by electron transport complexes of the respiratory chain. F-type ATP synthases consist of two structural domains, F(1) - containing the extramembraneous catalytic core, and F(0) - containing the membrane proton channel, linked together by a central stalk and a peripheral stalk. During catalysis, ATP synthesis in the catalytic domain of F(1) is coupled via a rotary mechanism of the central stalk subunits to proton translocation. Part of the complex F(1) domain and the central stalk which is part of the complex rotary element. The gamma/ATP3 subunit protrudes into the catalytic domain formed of alpha/ATP1(3)beta/ATP2(3). Rotation of the central stalk against the surrounding alpha/ATP1(3)beta/ATP2(3) subunits leads to hydrolysis of ATP in three separate catalytic sites on the beta/ATP2 subunits. The polypeptide is ATP synthase subunit gamma, mitochondrial (Yarrowia lipolytica (strain CLIB 122 / E 150) (Yeast)).